A 326-amino-acid polypeptide reads, in one-letter code: Large ribosomal subunit protein uL4 (326 aa).

The tract at residues 1–211 is large ribosomal subunit protein uL4; the sequence is MASCVVKNWQ…EKLKARWGSG (211 aa). 2 disordered regions span residues 44–76 and 211–326; these read ARQG…ARAG and GAAA…EDND. A compositionally biased stretch (basic residues) spans 60–71; that stretch reads GGRKPWRQKGTG. The segment at 212–326 is unknown; the sequence is AAAAAPTQAD…TAAAEEEDND (115 aa). Basic and acidic residues predominate over residues 221 to 238; the sequence is DRLEDQAQAAEREARPVE. Composition is skewed to low complexity over residues 252–279 and 294–312; these read EAQA…QVQE and QGQA…PPAG. Acidic residues predominate over residues 313–326; sequence EEAETAAAEEEDND.

Belongs to the universal ribosomal protein uL4 family. Part of the 50S ribosomal subunit.

In terms of biological role, one of the primary rRNA binding proteins, this protein initially binds near the 5'-end of the 23S rRNA. It is important during the early stages of 50S assembly. It makes multiple contacts with different domains of the 23S rRNA in the assembled 50S subunit and ribosome. Functionally, forms part of the polypeptide exit tunnel. The chain is Large ribosomal subunit protein uL4 from Synechococcus sp. (strain JA-3-3Ab) (Cyanobacteria bacterium Yellowstone A-Prime).